The sequence spans 356 residues: 3-dehydroquinate synthase (356 aa).

Residues 106 to 110 (GVVGD), 130 to 131 (TT), lysine 143, and lysine 152 each bind NAD(+). Zn(2+) contacts are provided by glutamate 185, histidine 248, and histidine 265.

This sequence belongs to the sugar phosphate cyclases superfamily. Dehydroquinate synthase family. Co(2+) serves as cofactor. The cofactor is Zn(2+). It depends on NAD(+) as a cofactor.

The protein resides in the cytoplasm. The catalysed reaction is 7-phospho-2-dehydro-3-deoxy-D-arabino-heptonate = 3-dehydroquinate + phosphate. It functions in the pathway metabolic intermediate biosynthesis; chorismate biosynthesis; chorismate from D-erythrose 4-phosphate and phosphoenolpyruvate: step 2/7. In terms of biological role, catalyzes the conversion of 3-deoxy-D-arabino-heptulosonate 7-phosphate (DAHP) to dehydroquinate (DHQ). This is 3-dehydroquinate synthase from Thermoanaerobacter sp. (strain X514).